Here is a 151-residue protein sequence, read N- to C-terminus: Large ribosomal subunit protein bL9 (151 aa).

The protein belongs to the bacterial ribosomal protein bL9 family.

Its function is as follows. Binds to the 23S rRNA. The protein is Large ribosomal subunit protein bL9 of Pseudothermotoga lettingae (strain ATCC BAA-301 / DSM 14385 / NBRC 107922 / TMO) (Thermotoga lettingae).